Reading from the N-terminus, the 287-residue chain is Pyridoxal kinase PdxY (287 aa).

Residues Ser10 and 45-46 (TQ) each bind substrate. ATP contacts are provided by residues Asp112, Ala144, Glu149, Lys182, and 209–212 (RPLV). Asp224 lines the substrate pocket.

This sequence belongs to the pyridoxine kinase family. PdxY subfamily. As to quaternary structure, homodimer. Requires Mg(2+) as cofactor.

It catalyses the reaction pyridoxal + ATP = pyridoxal 5'-phosphate + ADP + H(+). Its pathway is cofactor metabolism; pyridoxal 5'-phosphate salvage; pyridoxal 5'-phosphate from pyridoxal: step 1/1. Functionally, pyridoxal kinase involved in the salvage pathway of pyridoxal 5'-phosphate (PLP). Catalyzes the phosphorylation of pyridoxal to PLP. The protein is Pyridoxal kinase PdxY of Escherichia coli (strain UTI89 / UPEC).